The following is a 285-amino-acid chain: 2,3,4,5-tetrahydropyridine-2,6-dicarboxylate N-succinyltransferase (285 aa).

Substrate is bound by residues R111 and D148.

The protein belongs to the transferase hexapeptide repeat family. Homotrimer.

It is found in the cytoplasm. The catalysed reaction is (S)-2,3,4,5-tetrahydrodipicolinate + succinyl-CoA + H2O = (S)-2-succinylamino-6-oxoheptanedioate + CoA. It participates in amino-acid biosynthesis; L-lysine biosynthesis via DAP pathway; LL-2,6-diaminopimelate from (S)-tetrahydrodipicolinate (succinylase route): step 1/3. The polypeptide is 2,3,4,5-tetrahydropyridine-2,6-dicarboxylate N-succinyltransferase (Rhizobium meliloti (strain 1021) (Ensifer meliloti)).